The primary structure comprises 422 residues: Biofilm regulator 1 (422 aa).

Low complexity-rich tracts occupy residues 1–19 (MSSSSSLSSSTTTATTTSA) and 36–45 (SGGSNNGNGS). Disordered stretches follow at residues 1-86 (MSSS…KCPP) and 116-207 (RLSS…PSHP). The segment covering 46 to 61 (ALKSQISPRLSDTSRI) has biased composition (polar residues). 2 stretches are compositionally biased toward low complexity: residues 69–81 (TSGSSTPTSSSTP) and 120–143 (PTLPVKVQPQQQPQLPPASSLSPV). A compositionally biased stretch (polar residues) spans 146-159 (VINTPPQQPQSVSA). Over residues 160 to 194 (STSPNTQYQYYQYQQQSSPIQQQQQQQQATPAATP) the composition is skewed to low complexity. Over residues 195–205 (TVMQMAQNQPS) the composition is skewed to polar residues. The GATA-type zinc finger occupies 282–307 (CHRCGTTETPEWRRGPKGVRTLCNAC).

Interacts with HDA1.

The protein resides in the nucleus. Functionally, transcription factor required for hyphal growth, biofilm formation, and virulence. Promotes formation of both conventional and pheromone-stimulated biofilms. Binds and recruits HDA1 to promoters of hypha-specific genes in a rapamycin-dependent manner. Involved in the switch between two heritable states, the white and opaque states. These two cell types differ in many characteristics, including cell structure, mating competence, and virulence. Each state is heritable for many generations, and switching between states occurs stochastically at low frequency. This chain is Biofilm regulator 1 (BRG1), found in Candida albicans (strain SC5314 / ATCC MYA-2876) (Yeast).